The chain runs to 79 residues: uncharacterized protein (79 aa).

The N-terminal stretch at 1–19 (MKYVALAFVLSLVILQISA) is a signal peptide. The tract at residues 52–71 (RGRKSRTQSGRNQGKSTSDS) is disordered. The span at 58–71 (TQSGRNQGKSTSDS) shows a compositional bias: polar residues.

Nacreous layer of shell (at protein level). Expressed primarily in the mantle with highest level in the mantle pallium and lower level in the mantle edge.

It localises to the secreted. This is an uncharacterized protein from Margaritifera margaritifera (Freshwater pearl mussel).